The chain runs to 221 residues: Endonuclease V (221 aa).

Residues Asp-38 and Asp-104 each coordinate Mg(2+).

It belongs to the endonuclease V family. Mg(2+) serves as cofactor.

It is found in the cytoplasm. The enzyme catalyses Endonucleolytic cleavage at apurinic or apyrimidinic sites to products with a 5'-phosphate.. In terms of biological role, DNA repair enzyme involved in the repair of deaminated bases. Selectively cleaves double-stranded DNA at the second phosphodiester bond 3' to a deoxyinosine leaving behind the intact lesion on the nicked DNA. Recognizes only deoxyinosine. In Archaeoglobus fulgidus (strain ATCC 49558 / DSM 4304 / JCM 9628 / NBRC 100126 / VC-16), this protein is Endonuclease V.